The sequence spans 406 residues: Probable 2,3-bisphosphoglycerate-independent phosphoglycerate mutase (406 aa).

The protein belongs to the BPG-independent phosphoglycerate mutase family. A-PGAM subfamily.

The catalysed reaction is (2R)-2-phosphoglycerate = (2R)-3-phosphoglycerate. Its pathway is carbohydrate degradation; glycolysis; pyruvate from D-glyceraldehyde 3-phosphate: step 3/5. In terms of biological role, catalyzes the interconversion of 2-phosphoglycerate and 3-phosphoglycerate. This Thermus thermophilus (strain ATCC BAA-163 / DSM 7039 / HB27) protein is Probable 2,3-bisphosphoglycerate-independent phosphoglycerate mutase.